Reading from the N-terminus, the 232-residue chain is Protein shisa-3 (232 aa).

The signal sequence occupies residues 1 to 19; that stretch reads MRLLGCFFLIFLTWGSARA. Residues 20–93 lie on the Lumenal side of the membrane; sequence QGEYCHGWLD…GVSAQPVYVP (74 aa). Residues 94 to 114 traverse the membrane as a helical segment; sequence FLIVGSIFIAFIIVGSLVAVY. Residues 115–232 lie on the Cytoplasmic side of the membrane; it reads CCTCLRPKQT…NKSCPDFRQS (118 aa). The segment at 146 to 185 is disordered; sequence TSGNLRTPSRQSSTATSSTSTGGSVRRLSSSRADPGYLVS. Over residues 151 to 177 the composition is skewed to low complexity; the sequence is RTPSRQSSTATSSTSTGGSVRRLSSSR.

This sequence belongs to the shisa family. Interacts with fzd8 and fgfr1.

Its subcellular location is the endoplasmic reticulum membrane. In terms of biological role, plays an essential role in the maturation of presomitic mesoderm cells by individual attenuation of both fgf and wnt signaling. Regulates head and somite developmen. Inhibits both wnt and fgf signaling through the regulation of protein maturation and cell surface transportation of their receptors within the endoplasmic reticulum. The polypeptide is Protein shisa-3 (shisa3) (Xenopus laevis (African clawed frog)).